Here is a 564-residue protein sequence, read N- to C-terminus: M protein, serotype 12 (564 aa).

A signal peptide spans 1 to 41; it reads MAKNTTNRHYSLRKLKTGTASVAVALTVVGAGLVAGQTVRA. The stretch at 44–505 forms a coiled coil; the sequence is SDLVAEKQRL…RAGKASDSQT (462 aa). C repeat units follow at residues 285-319, 327-361, 363-397, and 405-439; these read KQLE…EAEL, AKVT…VEAA, KQLE…EKDL, and DKVK…EKAL. Disordered stretches follow at residues 372–391 and 404–438; these read SEAS…EAKK and LDKV…VEKA. Basic and acidic residues-rich tracts occupy residues 404 to 413 and 421 to 438; these read LDKVKEEKQI and LRRD…VEKA. D repeat units follow at residues 472–477, 478–483, 486–491, and 493–498; these read AKLEAE, AKALKE, AKQAEE, and AKLRAG. Residues 493–550 form a disordered region; that stretch reads AKLRAGKASDSQTPDAKPGNKAVPGKGQAPQAGTKPNQNKAPMKETKRQLPSTGETAN. Residues 542 to 546 carry the LPXTG sorting signal motif; the sequence is LPSTG. Threonine 545 carries the post-translational modification Pentaglycyl murein peptidoglycan amidated threonine. A propeptide spans 546 to 564 (removed by sortase); that stretch reads GETANPFFTAAALTVMAAA.

This sequence belongs to the M protein family.

Its subcellular location is the secreted. It localises to the cell wall. Functionally, this protein is one of the different antigenic serotypes of protein M. Protein M is closely associated with virulence of the bacterium and can render the organism resistant to phagocytosis. In Streptococcus pyogenes, this protein is M protein, serotype 12 (emm12).